Here is a 132-residue protein sequence, read N- to C-terminus: Small ribosomal subunit protein uS8 (132 aa).

The protein belongs to the universal ribosomal protein uS8 family. In terms of assembly, part of the 30S ribosomal subunit. Contacts proteins S5 and S12.

One of the primary rRNA binding proteins, it binds directly to 16S rRNA central domain where it helps coordinate assembly of the platform of the 30S subunit. In Bifidobacterium animalis subsp. lactis (strain AD011), this protein is Small ribosomal subunit protein uS8.